Here is a 38-residue protein sequence, read N- to C-terminus: Large ribosomal subunit protein bL36 (38 aa).

Belongs to the bacterial ribosomal protein bL36 family.

The polypeptide is Large ribosomal subunit protein bL36 (Sorangium cellulosum (strain So ce56) (Polyangium cellulosum (strain So ce56))).